Here is a 244-residue protein sequence, read N- to C-terminus: AA9 family lytic polysaccharide monooxygenase B (244 aa).

Positions 1–19 (MFLVPLLAALSLSAPKVAA) are cleaved as a signal peptide. H20 provides a ligand contact to Cu(2+). Y39 is a (1,4-beta-D-glucosyl)n binding site. 2 disulfide bridges follow: C68-C189 and C111-C115. H99 provides a ligand contact to Cu(2+). N-linked (GlcNAc...) asparagine glycosylation is present at N152. Residues H178 and Q184 each coordinate O2. A Cu(2+)-binding site is contributed by Y186. Positions 224, 226, and 229 each coordinate (1,4-beta-D-glucosyl)n. N233 carries N-linked (GlcNAc...) asparagine glycosylation.

Belongs to the polysaccharide monooxygenase AA9 family. Requires Cu(2+) as cofactor.

It is found in the secreted. It catalyses the reaction [(1-&gt;4)-beta-D-glucosyl]n+m + reduced acceptor + O2 = 4-dehydro-beta-D-glucosyl-[(1-&gt;4)-beta-D-glucosyl]n-1 + [(1-&gt;4)-beta-D-glucosyl]m + acceptor + H2O.. Functionally, lytic polysaccharide monooxygenase (LPMO) that depolymerizes crystalline and amorphous polysaccharides via the oxidation of scissile alpha- or beta-(1-4)-glycosidic bonds, yielding specifically C1 oxidation product. Catalysis by LPMOs requires the reduction of the active-site copper from Cu(II) to Cu(I) by a reducing agent and H(2)O(2) or O(2) as a cosubstrate. Displays catalytic activity on insoluble cellulose using I-beta microfibril model substrate. The protein is AA9 family lytic polysaccharide monooxygenase B of Heterobasidion irregulare (strain TC 32-1).